The sequence spans 372 residues: Proton-coupled zinc antiporter SLC30A2 (372 aa).

At 1–140 the chain is on the cytoplasmic side; the sequence is MEAKEKQHLL…TMNFGWQRAE (140 aa). A Mitochondrial localization signal motif is present at residues 51 to 54; that stretch reads HHCH. Residues cysteine 53, histidine 106, and aspartate 110 each coordinate Zn(2+). A helical transmembrane segment spans residues 141-161; it reads ILGALVSVLSIWVVTGVLVYL. Topologically, residues 162 to 175 are lumenal; it reads AVERLISGDYEIDG. Residues 176–196 form a helical membrane-spanning segment; sequence GTMLITSGCAVAVNIIMGLTL. Over 197 to 220 the chain is Cytoplasmic; sequence HQSGHGHSHGTTNQQEENPSVRAA. The chain crosses the membrane as a helical span at residues 221–241; it reads FIHVIGDFMQSMGVLVAAYIL. Zn(2+) is bound by residues histidine 223 and aspartate 227. The Lumenal portion of the chain corresponds to 242–249; that stretch reads YFKPEYKY. Residues 250–270 form a helical membrane-spanning segment; it reads VDPICTFVFSILVLGTTLTIL. Residues 271 to 304 lie on the Cytoplasmic side of the membrane; the sequence is RDVILVLMEGTPKGVDFTAVRDLLLSVEGVEALH. The Lysosomal targeting motif motif lies at 294–295; sequence LL. Serine 296 carries the phosphoserine modification. Residues histidine 304, histidine 321, and glutamate 355 each coordinate Zn(2+). The chain crosses the membrane as a helical span at residues 305–325; it reads SLHIWALTVAQPVLSVHIAIA. The Lumenal segment spans residues 326–372; sequence QNTDAQAVLKTASSRLQGKFHFHTVTIQIEDYSEDMKDCQACQGPSD.

The protein belongs to the cation diffusion facilitator (CDF) transporter (TC 2.A.4) family. SLC30A subfamily. Homodimer. Interacts (via lysosomal targeting motif) with AP3D1; in AP-3-mediated transport to lysosomes. Interacts with TMEM163. Post-translationally, phosphorylated at Ser-296. Phosphorylation at Ser-296 prevents localization to lysosomes. Dephosphorylation of Ser-296 which triggers localization to lysosomes, accumulation of zinc into lysosomes and lysosomal-mediated cell death is induced by TNF-alpha.

It is found in the cytoplasmic vesicle. Its subcellular location is the secretory vesicle membrane. The protein localises to the zymogen granule membrane. The protein resides in the endosome membrane. It localises to the lysosome membrane. It is found in the mitochondrion inner membrane. Its subcellular location is the cell membrane. The catalysed reaction is Zn(2+)(in) + 2 H(+)(out) = Zn(2+)(out) + 2 H(+)(in). Functionally, electroneutral proton-coupled antiporter concentrating zinc ions into a variety of intracellular organelles including endosomes, zymogen granules and mitochondria. Thereby, plays a crucial role in cellular zinc homeostasis to confer upon cells protection against its potential cytotoxicity. Regulates the zinc concentration of milk, through the transport of zinc ions into secretory vesicles of mammary cells. By concentrating zinc ions into lysosomes participates to lysosomal-mediated cell death during early mammary gland involution. Electroneutral proton-coupled antiporter mediating the efflux of zinc ions through the plasma membrane. The polypeptide is Proton-coupled zinc antiporter SLC30A2 (Homo sapiens (Human)).